A 1149-amino-acid chain; its full sequence is MGNENSTSDHQRTSSVQSPRSLQPPGKSQSLQKQQGDLPGSCAGSIPGTDDVIQPAAPVDPGHPPLAGIGSNQGEVCTSLQLSYTIVTVQSASPSAARASPAPLAPEHTASAPSAAGPGVEVTPTGSPQHLAKNEPRSSDSEEAFETPESTTPVKAPPAPPPPPPEVTPEPEVIDPPAPEEPGCISEPPVVVPDGPRSSESVEGSPFRPSHSSSAVFDEDKPIASSGTYNLDFDSIELVDNFQSLEPCSADSKGQECKVSTRRKSTESVPPSKSTLSRSLSLQASDFDGASCPGSPEAGTLTTDACGTGSNSASSTLKRTKKTRPPSLKKKQATKKPTETPPVKETQQEPGEESPVPSEEHLAPETKTESATPEGAGCTLSDDTPLESPAVPTATCPLTLESAEDVSPLVSGGGRVQNSPPVGRKSVPLTTASEAVEVTLSDSGGQEDLPAKGLSVRLEFDYSEDKGSWESQQENAPPTKKIGKKPVAKMPLRRPKMKKTPEKLDNTPASPPRSPTEPSDTPIAKGTYTFDIDKWDDPNFNPFSSTSKMQESPKLSQQSYNFDPDACEESLDPFKASSKTPSSPSKSPASFEIPASTTEADGDGLNKPAKKKKTPLKTMVEDVMSVCSLFDTFRVKKSPKRSPLSDPPSQDPTPAATPEAPSAISTVVHATDEEKLAVTSQKWTCMTVDLDADKQDFPQPSDLSNFVNETKFNSPSEELDYRNSYEIEYMEKLGSSLPQDDDTPKKQALYLMFDTPQESPVKSPPVRMSDSPTPCSGSSFEDTEALVNAATKLQHPVARGLPSSQEPLLQVPEKPSQKELEAMALGTPAEAIEITAPEGAFASADTLLSRLAHPASLCGALGYLEPDLAEKNPPVFAQKLQEELEFAVMRIEALKLARQIALASRSRQDTKREAAHPPDVSISKTALYSRIGSTEVEKPPGLLFQQPDLDSALQVARAEVIAKEREVSEWRDKYEESRREVVEMRKIVAEYEKTIAQMIPGTERKILSHQTVQQLVLEKEQALADLNSVEKSLADLFRRYEKMKEVLEGFRKNEEVLKKCAQEYLSRVKKEEQRYQALKVHAEEKLDRANAEIAQVRGKAQQEQAAYQASLRKEQLRVDALERTLEQKNKEIEELTKICDELIAKMGKS.

Disordered stretches follow at residues 1-73, 91-227, and 247-430; these read MGNE…GSNQ, SASP…ASSG, and PCSA…VPLT. Residues 13–35 are compositionally biased toward polar residues; it reads TSSVQSPRSLQPPGKSQSLQKQQ. Residues 91–106 show a composition bias toward low complexity; it reads SASPSAARASPAPLAP. Residue serine 100 is modified to Phosphoserine. Positions 155–180 are enriched in pro residues; sequence KAPPAPPPPPPEVTPEPEVIDPPAPE. Serine 265 bears the Phosphoserine mark. Polar residues-rich tracts occupy residues 267-284 and 300-317; these read ESVP…SLQA and TLTT…SSTL. The segment covering 318-334 has biased composition (basic residues); sequence KRTKKTRPPSLKKKQAT. The residue at position 354 (serine 354) is a Phosphoserine. A compositionally biased stretch (basic and acidic residues) spans 358–368; that stretch reads SEEHLAPETKT. Phosphoserine is present on serine 419. Residue threonine 439 is modified to Phosphothreonine. Positions 463–617 are disordered; it reads SEDKGSWESQ…PAKKKKTPLK (155 aa). The segment covering 481 to 498 has biased composition (basic residues); that stretch reads KIGKKPVAKMPLRRPKMK. An SPAZ domain is found at 508–596; it reads PASPPRSPTE…SPASFEIPAS (89 aa). Residues serine 510 and serine 514 each carry the phosphoserine modification. Residue threonine 516 is modified to Phosphothreonine. Residues 541 to 561 show a composition bias toward polar residues; it reads NPFSSTSKMQESPKLSQQSYN. Serine 552, serine 582, serine 585, serine 587, and serine 596 each carry phosphoserine. The span at 575–590 shows a compositional bias: low complexity; the sequence is KASSKTPSSPSKSPAS. Threonine 632, threonine 653, and threonine 657 each carry phosphothreonine. 2 disordered regions span residues 636–665 and 696–719; these read KKSP…SAIS and DFPQ…SEEL. Low complexity predominate over residues 652-665; it reads PTPAATPEAPSAIS. Residues 701-716 are compositionally biased toward polar residues; sequence SDLSNFVNETKFNSPS. Serine 714 and serine 736 each carry phosphoserine. Position 755 is a phosphothreonine (threonine 755). A disordered region spans residues 756 to 780; that stretch reads PQESPVKSPPVRMSDSPTPCSGSSF. Residues serine 759 and serine 771 each carry the phosphoserine modification. The segment covering 770–780 has biased composition (polar residues); it reads DSPTPCSGSSF. Coiled coils occupy residues 877–905 and 948–1148; these read AQKL…LASR and DLDS…KMGK.

This sequence belongs to the TACC family. Interacts with microtubules. Interacts with YEATS4, GCN5L2 and PCAF. Interacts with CCDC100/CEP120. In terms of processing, phosphorylated; which is required for localization in centrosome. In terms of tissue distribution, expressed in brain, kidney, lung, thymus and ovary. Not detectable in normal tissues at protein level.

It localises to the cytoplasm. Its subcellular location is the nucleus. It is found in the cytoskeleton. The protein resides in the microtubule organizing center. The protein localises to the centrosome. In terms of biological role, plays a role in the microtubule-dependent coupling of the nucleus and the centrosome. Involved in the processes that regulate centrosome-mediated interkinetic nuclear migration (INM) of neural progenitors. May play a role in organizing centrosomal microtubules. This Mus musculus (Mouse) protein is Transforming acidic coiled-coil-containing protein 2 (Tacc2).